We begin with the raw amino-acid sequence, 359 residues long: Biotin synthase (359 aa).

Residues 67–302 (CCGNRVDLCS…QQILRYAGGR (236 aa)) form the Radical SAM core domain. [4Fe-4S] cluster is bound by residues C85, C89, and C92. [2Fe-2S] cluster is bound by residues C130, C167, C227, and R297.

This sequence belongs to the radical SAM superfamily. Biotin synthase family. As to quaternary structure, homodimer. It depends on [4Fe-4S] cluster as a cofactor. The cofactor is [2Fe-2S] cluster.

The enzyme catalyses (4R,5S)-dethiobiotin + (sulfur carrier)-SH + 2 reduced [2Fe-2S]-[ferredoxin] + 2 S-adenosyl-L-methionine = (sulfur carrier)-H + biotin + 2 5'-deoxyadenosine + 2 L-methionine + 2 oxidized [2Fe-2S]-[ferredoxin]. It participates in cofactor biosynthesis; biotin biosynthesis; biotin from 7,8-diaminononanoate: step 2/2. Catalyzes the conversion of dethiobiotin (DTB) to biotin by the insertion of a sulfur atom into dethiobiotin via a radical-based mechanism. This is Biotin synthase from Gloeothece citriformis (strain PCC 7424) (Cyanothece sp. (strain PCC 7424)).